Consider the following 252-residue polypeptide: MTSNLYYVLISPYSLAYMVQYRSVTTAAGECRGDMWAVCARISSDVTCARHANLQRSIRRCFYIRSTMCEIMLLRDHGDYPVASRMKVIVWDEELAALAKRHTQGCVPEAYKCRHTLRFWTPGQLNFEFYADKMPFTMSLISTAIKRGHMQKHNITRDIVEKYQPVGPKGNVKELALAIFDRVTAVGCGLTTWKLGGKARAFFTCNFFSENDYNRPVYKTGNSPGEKCIKKDETFKNLCFAQEPINPNEHNL.

The first 23 residues, Met-1–Ser-23, serve as a signal peptide directing secretion. Residues Arg-32–Asp-34 carry the Cell attachment site motif. The 145-residue stretch at Tyr-63–Phe-207 folds into the SCP domain.

This sequence belongs to the CRISP family. In terms of tissue distribution, expressed in salivary glands.

The protein resides in the secreted. Its function is as follows. Inhibits platelet aggregation induced by all agonists tested (ADP, arachidonic acid, the thromboxane A2 analog U46619, thrombin, and snake venom snaclecs (TMVA that activates platelet through GPIB, and stejnulxin that specifically acts through GPVI (GP6))). May act by competing with fibrinogen for binding to glycoprotein IIb/IIIa (ITGA2B/ITGB3). The sequence is that of Tabinhibitin 9 from Tabanus yao (Horsefly).